We begin with the raw amino-acid sequence, 132 residues long: Small ribosomal subunit protein uS8 (132 aa).

Belongs to the universal ribosomal protein uS8 family. Part of the 30S ribosomal subunit. Contacts proteins S5 and S12.

Functionally, one of the primary rRNA binding proteins, it binds directly to 16S rRNA central domain where it helps coordinate assembly of the platform of the 30S subunit. This is Small ribosomal subunit protein uS8 from Bacillus velezensis (strain DSM 23117 / BGSC 10A6 / LMG 26770 / FZB42) (Bacillus amyloliquefaciens subsp. plantarum).